The sequence spans 410 residues: Cysteine desulfurase IscS (410 aa).

Pyridoxal 5'-phosphate is bound by residues 80–81, Asn-160, Gln-188, and 208–210; these read AT and SGH. An N6-(pyridoxal phosphate)lysine modification is found at Lys-211. Pyridoxal 5'-phosphate is bound at residue Thr-248. The Cysteine persulfide intermediate role is filled by Cys-334. Cys-334 is a [2Fe-2S] cluster binding site.

It belongs to the class-V pyridoxal-phosphate-dependent aminotransferase family. NifS/IscS subfamily. As to quaternary structure, homodimer. Forms a heterotetramer with IscU, interacts with other sulfur acceptors. It depends on pyridoxal 5'-phosphate as a cofactor.

Its subcellular location is the cytoplasm. It carries out the reaction (sulfur carrier)-H + L-cysteine = (sulfur carrier)-SH + L-alanine. Its pathway is cofactor biosynthesis; iron-sulfur cluster biosynthesis. Master enzyme that delivers sulfur to a number of partners involved in Fe-S cluster assembly, tRNA modification or cofactor biosynthesis. Catalyzes the removal of elemental sulfur atoms from cysteine to produce alanine. Functions as a sulfur delivery protein for Fe-S cluster synthesis onto IscU, an Fe-S scaffold assembly protein, as well as other S acceptor proteins. In Rickettsia massiliae (strain Mtu5), this protein is Cysteine desulfurase IscS.